Here is a 194-residue protein sequence, read N- to C-terminus: Protein GrpE (194 aa).

A compositionally biased stretch (polar residues) spans 1–14 (MENTQENPTSQNPT). Residues 1–50 (MENTQENPTSQNPTPADETARQAAEAAAPQQEAAANAATDSPVNAEQSAL) form a disordered region. The span at 21 to 38 (RQAAEAAAPQQEAAANAA) shows a compositional bias: low complexity.

It belongs to the GrpE family. In terms of assembly, homodimer.

The protein resides in the cytoplasm. Participates actively in the response to hyperosmotic and heat shock by preventing the aggregation of stress-denatured proteins, in association with DnaK and GrpE. It is the nucleotide exchange factor for DnaK and may function as a thermosensor. Unfolded proteins bind initially to DnaJ; upon interaction with the DnaJ-bound protein, DnaK hydrolyzes its bound ATP, resulting in the formation of a stable complex. GrpE releases ADP from DnaK; ATP binding to DnaK triggers the release of the substrate protein, thus completing the reaction cycle. Several rounds of ATP-dependent interactions between DnaJ, DnaK and GrpE are required for fully efficient folding. This chain is Protein GrpE, found in Paraburkholderia phytofirmans (strain DSM 17436 / LMG 22146 / PsJN) (Burkholderia phytofirmans).